Consider the following 260-residue polypeptide: Transmembrane protein 70, mitochondrial (260 aa).

Residues 1–81 (MLFLALGSPW…PVYWEGYVRF (81 aa)) constitute a mitochondrion transit peptide. Topologically, residues 82 to 102 (LNTPSDKSEDGRLIYTGNMAR) are mitochondrial matrix. Residues 103–123 (AVFGVKCFSYSTSLIGLTFLP) form a helical membrane-spanning segment. The Mitochondrial intermembrane portion of the chain corresponds to 124 to 141 (YIFTQNNAISESVPLPIQ). A helical transmembrane segment spans residues 142–162 (IIFYGIMGSFTVITPVLLHFI). The Mitochondrial matrix segment spans residues 163–260 (TKGYVIRLYH…SEEKRHKDDK (98 aa)).

This sequence belongs to the TMEM70 family. Homooligomer. Interacts (homooligomer form) with ATP5MC1; this interaction facilitates the oligomer formation of subunit c/ATP5MC1 (c-ring) and the c-ring membrane insertion and also protects ATP5MC1 against intramitochondrial proteolysis. Interacts with the core subunits TMEM126B, NDUFAF1, ECSIT and ACAD9 of the MCIA complex. Interacts with ATP5MC3, TMEM242 and TIMMDC1. Lower expressed in the heart than in the liver (at protein level).

It localises to the mitochondrion inner membrane. Scaffold protein that participates in the c-ring assembly of mitochondrial ATP synthase (F(1)F(0) ATP synthase or complex V) by facilitating the membrane insertion and oligomer formation of the subunit c/ATP5MC1 through its interaction. Therefore, participates in the early stage of mitochondrial ATP synthase biogenesis and also protects subunit c/ATP5MC1 against intramitochondrial proteolysis. In addition, binds the mitochondrial proton-transporting ATP synthase complexes I and may play a role in the stability of its membrane-bound subassemblies. The chain is Transmembrane protein 70, mitochondrial from Homo sapiens (Human).